Consider the following 385-residue polypeptide: Citrate synthase (385 aa).

Active-site residues include H223, H263, and D318.

This sequence belongs to the citrate synthase family. In terms of assembly, homodimer.

It carries out the reaction oxaloacetate + acetyl-CoA + H2O = citrate + CoA + H(+). Its pathway is carbohydrate metabolism; tricarboxylic acid cycle; isocitrate from oxaloacetate: step 1/2. Its activity is regulated as follows. Allosterically inhibited by NADH. The sequence is that of Citrate synthase (gltA) from Thermoplasma acidophilum (strain ATCC 25905 / DSM 1728 / JCM 9062 / NBRC 15155 / AMRC-C165).